The chain runs to 426 residues: Pistil-specific extensin-like protein (426 aa).

Residues 1–23 (MAVIISSKVLLIQLFVLVLGSFS) form the signal peptide. Disordered regions lie at residues 56–109 (GPTF…GSKL) and 121–254 (NLPD…AAEP). Composition is skewed to pro residues over residues 60–94 (VLPP…PLIP), 123–161 (PDVP…PSPP), 168–224 (PPQP…PPPP), and 231–254 (LLPP…AAEP). A run of 3 repeats spans residues 69–73 (SPPPP), 76–80 (SPPPP), and 83–87 (SPPPP). The tract at residues 69-182 (SPPPPSPSPP…PAKQPSPPPP (114 aa)) is 4 X 5 AA repeats of S-P(4). Repeat 4 spans residues 178–182 (SPPPP). Asparagine 310 is a glycosylation site (N-linked (GlcNAc...) asparagine).

As to expression, pistil (stigma and style tissue).

The protein is Pistil-specific extensin-like protein of Nicotiana tabacum (Common tobacco).